Here is a 339-residue protein sequence, read N- to C-terminus: NADH-quinone oxidoreductase subunit H (339 aa).

9 helical membrane passes run 10–30 (FPLIIIALKVVAITVPLILCV), 50–70 (PNVVGPFGLLQPIADAVKLLF), 82–102 (ILFILAPMITFILSLIGWAVV), 115–135 (VGVLYILAISSLSVYGIIIAG), 161–181 (MGLVIITVLLTTGTLNLSGII), 187–207 (IPWWIDLMLLPMGVVFFISVL), 235–255 (MGFALFFLGEYANMILVSAMT), 275–295 (IPGFFWFAFKVGFLLFCFLWI), and 310–330 (LGWKVLLPLTLFWVVLVSSVL).

This sequence belongs to the complex I subunit 1 family. NDH-1 is composed of 14 different subunits. Subunits NuoA, H, J, K, L, M, N constitute the membrane sector of the complex.

It is found in the cell inner membrane. The catalysed reaction is a quinone + NADH + 5 H(+)(in) = a quinol + NAD(+) + 4 H(+)(out). Functionally, NDH-1 shuttles electrons from NADH, via FMN and iron-sulfur (Fe-S) centers, to quinones in the respiratory chain. The immediate electron acceptor for the enzyme in this species is believed to be ubiquinone. Couples the redox reaction to proton translocation (for every two electrons transferred, four hydrogen ions are translocated across the cytoplasmic membrane), and thus conserves the redox energy in a proton gradient. This subunit may bind ubiquinone. This is NADH-quinone oxidoreductase subunit H from Rickettsia canadensis (strain McKiel).